Consider the following 335-residue polypeptide: Glyceraldehyde-3-phosphate dehydrogenase (335 aa).

NAD(+)-binding positions include 10–11 (RI), D33, R77, and S119. D-glyceraldehyde 3-phosphate contacts are provided by residues 150–152 (SCT), T181, 210–211 (TG), and R233. Residue C151 is the Nucleophile of the active site. N315 provides a ligand contact to NAD(+).

This sequence belongs to the glyceraldehyde-3-phosphate dehydrogenase family. As to quaternary structure, homotetramer.

The protein localises to the cytoplasm. The catalysed reaction is D-glyceraldehyde 3-phosphate + phosphate + NAD(+) = (2R)-3-phospho-glyceroyl phosphate + NADH + H(+). It participates in carbohydrate degradation; glycolysis; pyruvate from D-glyceraldehyde 3-phosphate: step 1/5. Catalyzes the oxidative phosphorylation of glyceraldehyde 3-phosphate (G3P) to 1,3-bisphosphoglycerate (BPG) using the cofactor NAD. The first reaction step involves the formation of a hemiacetal intermediate between G3P and a cysteine residue, and this hemiacetal intermediate is then oxidized to a thioester, with concomitant reduction of NAD to NADH. The reduced NADH is then exchanged with the second NAD, and the thioester is attacked by a nucleophilic inorganic phosphate to produce BPG. In Chlamydia pneumoniae (Chlamydophila pneumoniae), this protein is Glyceraldehyde-3-phosphate dehydrogenase (gap).